A 568-amino-acid chain; its full sequence is Periplasmic trehalase (568 aa).

Residues 1 to 38 form the signal peptide; that stretch reads MPHAPARSGDAMSAAAPPCCTSLLGLSLSMFVAPCALA. Substrate is bound by residues R169, 176-177, N213, 222-224, 294-296, and G327; these read WD, RSQ, and RPE. Active-site proton donor/acceptor residues include D329 and E511. Substrate is bound at residue E526.

Belongs to the glycosyl hydrolase 37 family.

The protein localises to the periplasm. The enzyme catalyses alpha,alpha-trehalose + H2O = alpha-D-glucose + beta-D-glucose. Its function is as follows. Provides the cells with the ability to utilize trehalose at high osmolarity by splitting it into glucose molecules that can subsequently be taken up by the phosphotransferase-mediated uptake system. This Xanthomonas campestris pv. campestris (strain 8004) protein is Periplasmic trehalase.